A 448-amino-acid polypeptide reads, in one-letter code: ATP-dependent protease ATPase subunit HslU (448 aa).

ATP contacts are provided by residues Ile18, 60 to 65 (GVGKTE), Asp261, Glu326, and Arg398.

Belongs to the ClpX chaperone family. HslU subfamily. As to quaternary structure, a double ring-shaped homohexamer of HslV is capped on each side by a ring-shaped HslU homohexamer. The assembly of the HslU/HslV complex is dependent on binding of ATP.

It localises to the cytoplasm. Its function is as follows. ATPase subunit of a proteasome-like degradation complex; this subunit has chaperone activity. The binding of ATP and its subsequent hydrolysis by HslU are essential for unfolding of protein substrates subsequently hydrolyzed by HslV. HslU recognizes the N-terminal part of its protein substrates and unfolds these before they are guided to HslV for hydrolysis. This Paraburkholderia xenovorans (strain LB400) protein is ATP-dependent protease ATPase subunit HslU.